Reading from the N-terminus, the 170-residue chain is MALLPILEFPDPRLRTKAALIDAAEVTTPAFQELVDNMFQTMYDAPGIGLAATQVDVHKRFMVIDVSEEKNEPHVFINPEIVAKDGGRVYQEGCLSVPGIFADVTRADTITVKYLDRDGQQQELEAGEVLATCIQHEMDHLDGKLFIDYLSPLKREMVRKKLAKQRKHVA.

Fe cation-binding residues include Cys94 and His136. Residue Glu137 is part of the active site. His140 serves as a coordination point for Fe cation.

Belongs to the polypeptide deformylase family. Fe(2+) is required as a cofactor.

The enzyme catalyses N-terminal N-formyl-L-methionyl-[peptide] + H2O = N-terminal L-methionyl-[peptide] + formate. Its function is as follows. Removes the formyl group from the N-terminal Met of newly synthesized proteins. Requires at least a dipeptide for an efficient rate of reaction. N-terminal L-methionine is a prerequisite for activity but the enzyme has broad specificity at other positions. In Stenotrophomonas maltophilia (strain R551-3), this protein is Peptide deformylase.